The chain runs to 1500 residues: Myosin-8 (1500 aa).

The Myosin N-terminal SH3-like domain occupies 8-57; the sequence is AVGSHVWVEDPDEAWLDGEVVEINGDQIKVLCASGKQVVVKDSNIYPKDV. In terms of domain architecture, Myosin motor spans 62–732; it reads SGVEDMTRLA…QMADLDTRRT (671 aa). Residues 156-163 and 210-218 each bind ATP; these read GESGAGKT and NNNSSRFGK. 4 actin-binding regions span residues 496–530, 532–555, 590–613, and 613–635; these read LIEKKPGGIIALLDEACMFPRSTHETFAQKLYQTY, NHKRFTKPKLARSDFTICHYAGDV, FPPVSDDSKQSKFSSIGTRFKQQL, and LVSLLEILNTTEPHYIRCIKPNN. IQ domains follow at residues 735–764, 758–787, 783–812, 806–835, 831–860, and 854–883; these read LGRSASIIQRKVRSYLAQKTFIQLRISATQ, LRISATQIQAVCRGYLARSIYEGMRREAAA, REAAALKIQRDLRKFLARKAYTELFSATIL, LFSATILIQAGMRGMVSRKELCLRRQTKAA, QTKAATIIQTRCRVYLARLHYRKLKKAAIT, and LKKAAITTQCAWRGKVARKELKNLKMAARE. The stretch at 884-1049 forms a coiled coil; the sequence is TGALQEAKNK…TEKQIMLQQT (166 aa). In terms of domain architecture, Dilute spans 1146–1447; the sequence is DRLIEMIGSA…ISSMRALMTE (302 aa).

This sequence belongs to the TRAFAC class myosin-kinesin ATPase superfamily. Myosin family. Plant myosin class XI subfamily. Homodimer.

Its subcellular location is the cytoplasm. Functionally, myosin heavy chain that is required for the cell cycle-regulated transport of various organelles and proteins for their segregation. Functions by binding with its tail domain to receptor proteins on organelles and exerting force with its N-terminal motor domain against actin filaments, thereby transporting its cargo along polarized actin cables. This chain is Myosin-8 (XI-B), found in Arabidopsis thaliana (Mouse-ear cress).